An 85-amino-acid chain; its full sequence is UPF0335 protein Atu3758 (85 aa).

The protein belongs to the UPF0335 family.

The protein is UPF0335 protein Atu3758 of Agrobacterium fabrum (strain C58 / ATCC 33970) (Agrobacterium tumefaciens (strain C58)).